Here is a 60-residue protein sequence, read N- to C-terminus: Protein translocase subunit SecE (60 aa).

Topologically, residues 1–31 are cytoplasmic; that stretch reads MFARLIRYFQEARAELARVTWPTREQVVEGT. Residues 32–52 form a helical membrane-spanning segment; the sequence is QAILLFTLAFMVILGLYDTVF. Residues 53 to 60 lie on the Extracellular side of the membrane; sequence RFLIGLLR.

It belongs to the SecE/SEC61-gamma family. Component of the Sec protein translocase complex. Heterotrimer consisting of SecY, SecE and SecG subunits. The heterotrimers can form oligomers, although 1 heterotrimer is thought to be able to translocate proteins. Interacts with SecDF, and other proteins may be involved. The channel interacts with SecA via subunit SecY.

Its subcellular location is the cell inner membrane. Essential subunit of the protein translocation channel SecYEG. Clamps together the 2 halves of SecY. May contact the channel plug during translocation. The protein is Protein translocase subunit SecE of Thermus thermophilus (strain ATCC 27634 / DSM 579 / HB8).